The sequence spans 365 residues: Probable L-tyrosine/L-aspartate decarboxylase (365 aa).

Lysine 224 bears the N6-(pyridoxal phosphate)lysine mark.

Belongs to the group II decarboxylase family. MfnA subfamily. Requires pyridoxal 5'-phosphate as cofactor.

The catalysed reaction is L-tyrosine + H(+) = tyramine + CO2. The enzyme catalyses L-aspartate + H(+) = beta-alanine + CO2. It participates in cofactor biosynthesis; methanofuran biosynthesis. The protein operates within cofactor biosynthesis; coenzyme A biosynthesis. In terms of biological role, catalyzes the decarboxylation of L-tyrosine to produce tyramine for methanofuran biosynthesis. Can also catalyze the decarboxylation of L-aspartate to produce beta-alanine for coenzyme A (CoA) biosynthesis. This chain is Probable L-tyrosine/L-aspartate decarboxylase, found in Methanoculleus marisnigri (strain ATCC 35101 / DSM 1498 / JR1).